The following is a 298-amino-acid chain: 3-deoxy-manno-octulosonate cytidylyltransferase (298 aa).

A helical membrane pass occupies residues 22 to 42; the sequence is VWVLHGLALGAAAAAAAVAYL.

It belongs to the KdsB family. Mg(2+) is required as a cofactor. As to expression, ubiquitous.

The protein resides in the membrane. The enzyme catalyses 3-deoxy-alpha-D-manno-oct-2-ulosonate + CTP = CMP-3-deoxy-beta-D-manno-octulosonate + diphosphate. The protein operates within nucleotide-sugar biosynthesis; CMP-3-deoxy-D-manno-octulosonate biosynthesis; CMP-3-deoxy-D-manno-octulosonate from 3-deoxy-D-manno-octulosonate and CTP: step 1/1. Catalyzes the production of the sugar nucleotide CMP-3-deoxy-D-manno-octulosonate (CMP-KDO). CTP is the preferred nucleotide donor, and it can partially be replaced with UTP but not with ATP. Activates KDO during the biosynthesis of rhamnogalacturonan II (RG-II), a structurally complex pectic polysaccharide of the primary cell wall. RG-II is essential for the cell wall integrity of rapidly growing tissues and pollen tube growth and elongation. This chain is 3-deoxy-manno-octulosonate cytidylyltransferase, found in Zea mays (Maize).